A 65-amino-acid polypeptide reads, in one-letter code: Large ribosomal subunit protein uL29 (65 aa).

It belongs to the universal ribosomal protein uL29 family.

This Syntrophus aciditrophicus (strain SB) protein is Large ribosomal subunit protein uL29.